The following is a 455-amino-acid chain: GTPase Der (455 aa).

EngA-type G domains follow at residues 4–169 (PVVA…PPKS) and 178–353 (IQLA…EQHR). Residues 10–17 (GRPNVGKS), 57–61 (DTGGL), 120–123 (NKCE), 184–191 (GRPNVGKS), 231–235 (DTAGI), and 296–299 (NKWD) each bind GTP. The region spanning 354–439 (RRVSTSVVNE…PLKLFWRGKQ (86 aa)) is the KH-like domain.

The protein belongs to the TRAFAC class TrmE-Era-EngA-EngB-Septin-like GTPase superfamily. EngA (Der) GTPase family. As to quaternary structure, associates with the 50S ribosomal subunit.

Its function is as follows. GTPase that plays an essential role in the late steps of ribosome biogenesis. In Synechococcus sp. (strain WH7803), this protein is GTPase Der.